The primary structure comprises 105 residues: Small ribosomal subunit protein eS24 (105 aa).

The interval 86-105 is disordered; sequence LERNKIEADEEADEEAAEEA. A compositionally biased stretch (acidic residues) spans 93 to 105; it reads ADEEADEEAAEEA.

This sequence belongs to the eukaryotic ribosomal protein eS24 family.

The protein is Small ribosomal subunit protein eS24 of Natronomonas pharaonis (strain ATCC 35678 / DSM 2160 / CIP 103997 / JCM 8858 / NBRC 14720 / NCIMB 2260 / Gabara) (Halobacterium pharaonis).